The primary structure comprises 252 residues: Hydroxyacylglutathione hydrolase (252 aa).

Zn(2+) is bound by residues His-52, His-54, Asp-56, His-57, His-107, Asp-128, and His-166.

The protein belongs to the metallo-beta-lactamase superfamily. Glyoxalase II family. As to quaternary structure, monomer. Zn(2+) is required as a cofactor.

It catalyses the reaction an S-(2-hydroxyacyl)glutathione + H2O = a 2-hydroxy carboxylate + glutathione + H(+). Its pathway is secondary metabolite metabolism; methylglyoxal degradation; (R)-lactate from methylglyoxal: step 2/2. In terms of biological role, thiolesterase that catalyzes the hydrolysis of S-D-lactoyl-glutathione to form glutathione and D-lactic acid. The protein is Hydroxyacylglutathione hydrolase of Neisseria meningitidis serogroup C / serotype 2a (strain ATCC 700532 / DSM 15464 / FAM18).